The sequence spans 883 residues: MPKLVIVESPTKARTIRNYLPKDYRVEASMGHVRDLPQSASDIPTELKGEKWSNLGVDVENNFAPLYIVPKDKKKIVKTLKDALKDADELILATDEDREGESISWHLLQLLQPRVPTKRMVFHEITQEAIQAALKNCRDVDQRLVHAQETRRILDRLVGYTLSPLLWKKIAWGLSAGRVQSVAVRLLVQRERARRAFRQGSYWDLKAQLTVEAGQFEAKLWTLAGQRLATGNDFDESTGQIIAGRQVCLLDQQEAEALRDRLQTQPWQVKSLEEKPTTRKPAPPFTTSTLQQESNRKLRLSARETMRVAQSLYERGFITYMRTDSVHLSQQAIEAARSCVEQMYGKNYLSPQPRQFTTKSKNAQEAHEAIRPAGNTFRLPQETGLSGAEFALYDLIWKRTIASQMAEARQTMLSVLLEVDNAEFRASGKRIDFPGFFRAYVEGSDDPDAALEDREILLPALKVGDRPTCQELAAIGHETQPPARYTEASLVKMLENEGIGRPSTYASIIGTIVDRGYAQLVSNTLTPTFTAFAVTALLEQHFPDLVDTSFSARMEQSLDDISNGEVDWLPYLSQFYRGDRGLEEQVKLRESEIDPAAARTVALEGLPAKVRIGRFGAYLEAEADGEPIKANLPKELTPADLDVQRVETLLRQKTEGPDQLGTHPETDEPIYLLTGAYGPYVQLGAATEEKPKPKRASLPKGMSLETISLEQAVGLLSLPRTLGEHPETGRRIQAGLGRFGPYVVCDLGGGEKDYRSLKADDDVLTIDLDRALELLAQPKKSRGRGKEPIREVGLHPDDQAPIQIFEGPYGLYLKHGKVNASLPEDEKPETISLETAVAALAAKAGQAKAKGGRRSTGTPKSGETKARTTKTTKKTTTRRTTSR.

A Toprim domain is found at Pro-2–Thr-126. Positions 8 and 95 each coordinate Mg(2+). The Topo IA-type catalytic domain maps to Asp-141–Glu-583. Positions Ser-175 to Gln-180 are interaction with DNA. The interval Ser-271–Ser-294 is disordered. Catalysis depends on Tyr-320, which acts as the O-(5'-phospho-DNA)-tyrosine intermediate. The tract at residues Ala-842–Arg-883 is disordered. A compositionally biased stretch (basic residues) spans Arg-867–Arg-883.

It belongs to the type IA topoisomerase family. As to quaternary structure, monomer. The cofactor is Mg(2+).

It carries out the reaction ATP-independent breakage of single-stranded DNA, followed by passage and rejoining.. In terms of biological role, releases the supercoiling and torsional tension of DNA, which is introduced during the DNA replication and transcription, by transiently cleaving and rejoining one strand of the DNA duplex. Introduces a single-strand break via transesterification at a target site in duplex DNA. The scissile phosphodiester is attacked by the catalytic tyrosine of the enzyme, resulting in the formation of a DNA-(5'-phosphotyrosyl)-enzyme intermediate and the expulsion of a 3'-OH DNA strand. The free DNA strand then undergoes passage around the unbroken strand, thus removing DNA supercoils. Finally, in the religation step, the DNA 3'-OH attacks the covalent intermediate to expel the active-site tyrosine and restore the DNA phosphodiester backbone. In Synechococcus elongatus (strain ATCC 33912 / PCC 7942 / FACHB-805) (Anacystis nidulans R2), this protein is DNA topoisomerase 1.